The chain runs to 88 residues: UPF0297 protein SSU98_0066 (88 aa).

The protein belongs to the UPF0297 family.

The protein is UPF0297 protein SSU98_0066 of Streptococcus suis (strain 98HAH33).